A 297-amino-acid polypeptide reads, in one-letter code: 4-hydroxy-tetrahydrodipicolinate synthase (297 aa).

Thr-50 serves as a coordination point for pyruvate. The active-site Proton donor/acceptor is the Tyr-138. Catalysis depends on Lys-166, which acts as the Schiff-base intermediate with substrate. Ile-208 contributes to the pyruvate binding site.

This sequence belongs to the DapA family. As to quaternary structure, homotetramer; dimer of dimers.

The protein localises to the cytoplasm. It catalyses the reaction L-aspartate 4-semialdehyde + pyruvate = (2S,4S)-4-hydroxy-2,3,4,5-tetrahydrodipicolinate + H2O + H(+). It participates in amino-acid biosynthesis; L-lysine biosynthesis via DAP pathway; (S)-tetrahydrodipicolinate from L-aspartate: step 3/4. Its function is as follows. Catalyzes the condensation of (S)-aspartate-beta-semialdehyde [(S)-ASA] and pyruvate to 4-hydroxy-tetrahydrodipicolinate (HTPA). This is 4-hydroxy-tetrahydrodipicolinate synthase from Gluconobacter oxydans (strain 621H) (Gluconobacter suboxydans).